The primary structure comprises 187 residues: Peptidyl-tRNA hydrolase (187 aa).

Tyr-15 contributes to the tRNA binding site. His-20 functions as the Proton acceptor in the catalytic mechanism. TRNA is bound by residues Phe-64, Asn-66, and Asn-112.

Belongs to the PTH family. As to quaternary structure, monomer.

Its subcellular location is the cytoplasm. The catalysed reaction is an N-acyl-L-alpha-aminoacyl-tRNA + H2O = an N-acyl-L-amino acid + a tRNA + H(+). Functionally, hydrolyzes ribosome-free peptidyl-tRNAs (with 1 or more amino acids incorporated), which drop off the ribosome during protein synthesis, or as a result of ribosome stalling. In terms of biological role, catalyzes the release of premature peptidyl moieties from peptidyl-tRNA molecules trapped in stalled 50S ribosomal subunits, and thus maintains levels of free tRNAs and 50S ribosomes. The protein is Peptidyl-tRNA hydrolase of Bacteroides fragilis (strain ATCC 25285 / DSM 2151 / CCUG 4856 / JCM 11019 / LMG 10263 / NCTC 9343 / Onslow / VPI 2553 / EN-2).